A 121-amino-acid chain; its full sequence is Ribosome-binding factor A (121 aa).

It belongs to the RbfA family. In terms of assembly, monomer. Binds 30S ribosomal subunits, but not 50S ribosomal subunits or 70S ribosomes.

It is found in the cytoplasm. One of several proteins that assist in the late maturation steps of the functional core of the 30S ribosomal subunit. Associates with free 30S ribosomal subunits (but not with 30S subunits that are part of 70S ribosomes or polysomes). Required for efficient processing of 16S rRNA. May interact with the 5'-terminal helix region of 16S rRNA. The sequence is that of Ribosome-binding factor A from Paraburkholderia xenovorans (strain LB400).